We begin with the raw amino-acid sequence, 317 residues long: Ferrochelatase (317 aa).

Positions 192 and 271 each coordinate Fe cation.

The protein belongs to the ferrochelatase family.

Its subcellular location is the cytoplasm. The enzyme catalyses heme b + 2 H(+) = protoporphyrin IX + Fe(2+). Its pathway is porphyrin-containing compound metabolism; protoheme biosynthesis; protoheme from protoporphyrin-IX: step 1/1. Catalyzes the ferrous insertion into protoporphyrin IX. This Geobacter sp. (strain M21) protein is Ferrochelatase.